The following is a 215-amino-acid chain: Octanoyltransferase (215 aa).

Positions 42–215 (QNTPDEIWLL…AEKLKARLKQ (174 aa)) constitute a BPL/LPL catalytic domain. Residues 81 to 88 (RGGQITYH), 148 to 150 (ALG), and 161 to 163 (GLA) each bind substrate. Residue C179 is the Acyl-thioester intermediate of the active site.

Belongs to the LipB family.

It is found in the cytoplasm. It carries out the reaction octanoyl-[ACP] + L-lysyl-[protein] = N(6)-octanoyl-L-lysyl-[protein] + holo-[ACP] + H(+). It participates in protein modification; protein lipoylation via endogenous pathway; protein N(6)-(lipoyl)lysine from octanoyl-[acyl-carrier-protein]: step 1/2. In terms of biological role, catalyzes the transfer of endogenously produced octanoic acid from octanoyl-acyl-carrier-protein onto the lipoyl domains of lipoate-dependent enzymes. Lipoyl-ACP can also act as a substrate although octanoyl-ACP is likely to be the physiological substrate. This is Octanoyltransferase from Nitrosospira multiformis (strain ATCC 25196 / NCIMB 11849 / C 71).